Reading from the N-terminus, the 1100-residue chain is ATP-dependent DNA helicase mph1 (1100 aa).

Over residues 1-21 (MSDSDDYLQDDPDDQAFDDFA) the composition is skewed to acidic residues. Residues 1–250 (MSDSDDYLQD…RPSSFMQSSN (250 aa)) form a disordered region. Over residues 38–61 (RNQTRNTTSRRNEDNSVASDSDSF) the composition is skewed to low complexity. Positions 84–94 (FADHPENEASS) are enriched in basic and acidic residues. A compositionally biased stretch (polar residues) spans 104–117 (NNPQENIFVTQLTQ). Residues 135–146 (PPPPPPPAPTKP) are compositionally biased toward pro residues. Polar residues-rich tracts occupy residues 182 to 191 (RLSFSTAQNS) and 200 to 209 (NAPTNTAQTE). Residues 212-223 (DFLDDIPDDAFD) show a composition bias toward acidic residues. Residues 237-249 (SNSSRPSSFMQSS) are compositionally biased toward low complexity. The Helicase ATP-binding domain occupies 317 to 485 (ITQKGLFHNL…AVIDGLEISK (169 aa)). An ATP-binding site is contributed by 330–337 (LPTGLGKT). A DEAH box motif is present at residues 433–436 (DEAH). A Helicase C-terminal domain is found at 655 to 829 (YLKQVVLNHF…GTRFTFHDDK (175 aa)). Disordered regions lie at residues 850-913 (PEEN…PEPV) and 1003-1100 (RRPA…LGRR). 2 stretches are compositionally biased toward basic residues: residues 863 to 875 (RRGRVPKKPPKKF) and 1019 to 1028 (GNKKRLRKGR). Polar residues predominate over residues 1053-1066 (QPISPEQLLSSFTD). A compositionally biased stretch (acidic residues) spans 1082–1092 (LELDADFEAPD).

This sequence belongs to the DEAD box helicase family. DEAH subfamily. FANCM sub-subfamily. In terms of assembly, interacts with the MHF histone-fold complex to form the FANCM-MHF complex.

The protein resides in the nucleus. The catalysed reaction is ATP + H2O = ADP + phosphate + H(+). Functionally, ATP-dependent DNA helicase involved in DNA damage repair by homologous recombination and in genome maintenance. Capable of unwinding D-loops. Plays a role in limiting crossover recombinants during mitotic DNA double-strand break (DSB) repair. Component of a FANCM-MHF complex which promotes gene conversion at blocked replication forks, probably by reversal of the stalled fork. The sequence is that of ATP-dependent DNA helicase mph1 from Aspergillus terreus (strain NIH 2624 / FGSC A1156).